The sequence spans 280 residues: H-2 class II histocompatibility antigen gamma chain (280 aa).

At 1–30 (MDDQRDLISNHEQLPILGQRARAPESNCNR) the chain is on the cytoplasmic side. Ser-9 carries the phosphoserine modification. The helical; Signal-anchor for type II membrane protein transmembrane segment at 31–56 (GVLYTSVSVLVALLLAGQATTAYFLY) threads the bilayer. Over 57-280 (QQQGRLDKLT…TKQDMGQMFL (224 aa)) the chain is Extracellular. Residues Asn-114 and Asn-120 are each glycosylated (N-linked (GlcNAc...) asparagine). Residues 194-255 (LTKCQEEVSH…HTKSRGRHNC (62 aa)) form the Thyroglobulin type-1 domain. 3 disulfides stabilise this stretch: Cys-197–Cys-216, Cys-227–Cys-234, and Cys-236–Cys-255. The segment at 246 to 268 (HTKSRGRHNCSEPLDMEDPSSGL) is disordered. O-linked (Xyl...) (chondroitin sulfate) serine glycosylation is present at Ser-266.

As to quaternary structure, nonamer composed of three alpha/beta/gamma heterotrimers. Interacts with CD44; this complex is essential for the MIF-induced signaling cascade that results in B cell survival. In terms of assembly, interacts with the mature form of CTSL; the complex survive in neutral pH environment.

It localises to the late endosome. It is found in the lysosome. The protein localises to the cell membrane. The protein resides in the endoplasmic reticulum membrane. Its subcellular location is the golgi apparatus. It localises to the trans-Golgi network. It is found in the endosome. The protein localises to the secreted. Its function is as follows. Plays a critical role in MHC class II antigen processing by stabilizing peptide-free class II alpha/beta heterodimers in a complex soon after their synthesis and directing transport of the complex from the endoplasmic reticulum to compartments where peptide loading of class II takes place. Enhance also the stimulation of T-cell responses through interaction with CD44. Binds to the peptide-binding site of MHC class II alpha/beta heterodimers forming an alpha-beta-CLIP complex, thereby preventing the loading of antigenic peptides to the MHC class II complex until its release by HLA-DM in the endosome. Functionally, stabilizes the conformation of mature CTSL by binding to its active site and serving as a chaperone to help maintain a pool of mature enzyme in endocytic compartments and extracellular space of antigen-presenting cells (APCs). This is H-2 class II histocompatibility antigen gamma chain from Rattus norvegicus (Rat).